The chain runs to 370 residues: Coiled-coil domain-containing protein 89 (370 aa).

Residues 1-38 (MPQEESAPRMDTPSSEEPLDKQNRKLEDQEEEMGFKEL) form a disordered region. Thr-12 is subject to Phosphothreonine. Positions 18–38 (PLDKQNRKLEDQEEEMGFKEL) are enriched in basic and acidic residues. A coiled-coil region spans residues 19 to 346 (LDKQNRKLED…YDELRLQSEA (328 aa)).

It belongs to the CCDC89 family. As to quaternary structure, interacts with HEY1.

The protein resides in the cytoplasm. Its subcellular location is the nucleus. The chain is Coiled-coil domain-containing protein 89 from Bos taurus (Bovine).